Reading from the N-terminus, the 287-residue chain is GPN-loop GTPase 3 (287 aa).

Residue 12–17 participates in GTP binding; that stretch reads GAGKST. The short motif at 69-71 is the Gly-Pro-Asn (GPN)-loop; involved in dimer interface element; that stretch reads GPN. 172 to 175 lines the GTP pocket; sequence SKMD.

This sequence belongs to the GPN-loop GTPase family. As to quaternary structure, heterodimers with GPN1 or GPN2. Binds to RNA polymerase II (RNAPII).

Functionally, small GTPase required for proper nuclear import of RNA polymerase II and III (RNAPII and RNAPIII). May act at an RNAP assembly step prior to nuclear import. The sequence is that of GPN-loop GTPase 3 from Cryptococcus neoformans var. neoformans serotype D (strain B-3501A) (Filobasidiella neoformans).